We begin with the raw amino-acid sequence, 1287 residues long: MSGGGGGGGSAPSRFADYFVICGLDTETGLEPDELSALCQYIQASKARDGASPFISSTTEGENFEQTPLRRTFKSKVLARYPENVDWNPFDQDAVGMLCMPKGLAFKTQADPREPQFHAFIITREDGSRTFGFALTFYEEVTSKQICSAMQTLYHMHNAEYDVLHAPLADGGDQSGMEDGEGIPGTKLQRFNSYDISRDTLYVSKCICLITPMSFMKACRSVLQQLHQAVTSPQPPPLPLESYIYNVLYEVPLPPPGRSLKFSGVYGPIICQRPSTNELPLFDFPVKEVFELLGVENVFQLFTCALLEFQILLYSQHYQRLMTVAETITALMFPFQWQHVYVPILPASLLHFLDAPVPYLMGLHSNGLDDRSKLELPQEANLCFVDVDNHFIELPEDLPQFPNKLEFVQEVSEILMAFGVPPEGNLHCSESASKLKRIRASELVSDKKNGNIAGSPLHSYELLKENETIARLQALVKRTGVSLEKLEVREDPSSNKDFKVQCDEEELRIYQLNIQIREVFANRFTQMFADYEVFVIQPSQDKESWLSNREQMQNFDKASFLSDQPEPYLPFLSRFLETQMFASFIDNKIMCHDDDDKDPVLRVFDSRVDKIRLLNVRTPTLRTSMYQKCTTVDEAEKAIELRLAKIDHTAVHPHLLDMKIGQGKYEPGFFPKLQSDVLCTGPASNKWTKRNAPAQWRRKDRQKQHTEHLRLDNDQREKYIQEARNMGSTIRQPKLSNLSPSVIAQTNWKFVEGLLKECRNKTKRMLVEKMGREAVELGHGEVNITGVEENTLIASLCDLLERIWSHGLQVKQGKSALWSHLLHYQENRQRKLTSGSLSTSGILLDSERRKSDASAVMSPLRVSLIQDMRHIQNIGEIKTDVGKARAWVRLSMEKKLLSRHLKQLLSDHELTKKLYKRYAFLRCDDEKEQFLYHLLSFNAVDYFCFTNVFTTILIPYHILIVPSKKLGGSMFTANPWICISGELGETQILQIPRNVLEMTFECQNLGKLTTVQIGHDNSGLYAKWLVEYVMVRNEITGHTYKFPCGRWLGKGMDDGSLERVLVGELLTSLPEVDERPCRTPPLQQSPSVIRRLVTISPNNKPKLNTGQIQESIGEAVNGIVKHFHKPEKERGSLTLLLCGECGLVSALEQAFQHGFKSPRLFKNVFIWDFLEKAQTYYETLEQNDVVPEENWHTRARNFCRFVTAVNNTPRNIGKDGKFQMLVCLGARDHLLHHWIALLADCPITAHMYEDVALIKDHTLVNSLIRVLQTLQEFNITLDTSLVKGIDI.

The region spanning 57–259 (STTEGENFEQ…EVPLPPPGRS (203 aa)) is the uDENN domain. Residue Ser-193 is modified to Phosphoserine. The 137-residue stretch at 278–414 (ELPLFDFPVK…LEFVQEVSEI (137 aa)) folds into the cDENN domain. Residues 416-598 (MAFGVPPEGN…IMCHDDDDKD (183 aa)) form the dDENN domain. In terms of domain architecture, RUN 1 spans 787 to 950 (VEENTLIASL…DYFCFTNVFT (164 aa)). One can recognise a PLAT domain in the interval 954-1062 (IPYHILIVPS…DDGSLERVLV (109 aa)). A Phosphothreonine modification is found at Thr-1079. A phosphoserine mark is found at Ser-1085, Ser-1087, and Ser-1096. The RUN 2 domain occupies 1134 to 1280 (TLLLCGECGL…QEFNITLDTS (147 aa)).

Belongs to the RAB6IP1 family. In terms of assembly, interacts with RAB6A bound to GTP. In terms of tissue distribution, expressed in developing brain and developing neurons.

It localises to the golgi apparatus membrane. Its function is as follows. Guanine nucleotide exchange factor (GEF) which may activate RAB6A and RAB39A and/or RAB39B. Promotes the exchange of GDP to GTP, converting inactive GDP-bound Rab proteins into their active GTP-bound form. Involved in the negative regulation of neurite outgrowth. This chain is DENN domain-containing protein 5A (Dennd5a), found in Rattus norvegicus (Rat).